Here is a 158-residue protein sequence, read N- to C-terminus: Cyclic pyranopterin monophosphate synthase (158 aa).

Residues 76 to 78 (LCH) and 114 to 115 (ME) each bind substrate. Asp-129 is a catalytic residue.

This sequence belongs to the MoaC family. In terms of assembly, homohexamer; trimer of dimers.

The catalysed reaction is (8S)-3',8-cyclo-7,8-dihydroguanosine 5'-triphosphate = cyclic pyranopterin phosphate + diphosphate. Its pathway is cofactor biosynthesis; molybdopterin biosynthesis. Functionally, catalyzes the conversion of (8S)-3',8-cyclo-7,8-dihydroguanosine 5'-triphosphate to cyclic pyranopterin monophosphate (cPMP). The chain is Cyclic pyranopterin monophosphate synthase from Shewanella baltica (strain OS155 / ATCC BAA-1091).